We begin with the raw amino-acid sequence, 632 residues long: Asparagine synthetase [glutamine-hydrolyzing] 1 (632 aa).

Cys2 acts as the For GATase activity in catalysis. A Glutamine amidotransferase type-2 domain is found at 2-214 (CGFVGVFNKH…PGSQFTIRPD (213 aa)). L-glutamine contacts are provided by residues 52–56 (RLSII), 77–79 (NGE), and Asp102. Residues Val288 and 361-362 (SG) each bind ATP.

It belongs to the asparagine synthetase family.

It carries out the reaction L-aspartate + L-glutamine + ATP + H2O = L-asparagine + L-glutamate + AMP + diphosphate + H(+). It participates in amino-acid biosynthesis; L-asparagine biosynthesis; L-asparagine from L-aspartate (L-Gln route): step 1/1. Its function is as follows. Main asparagine synthetase in vegetative cells. The chain is Asparagine synthetase [glutamine-hydrolyzing] 1 (asnB) from Bacillus subtilis (strain 168).